A 171-amino-acid polypeptide reads, in one-letter code: Transcriptional repressor NrdR (171 aa).

The interval 1–21 (MQCPHCQHTDSRVLESRSSEN) is disordered. The segment at 3 to 34 (CPHCQHTDSRVLESRSSENGQSIRRRRECLQC) is a zinc-finger region. Positions 7–18 (QHTDSRVLESRS) are enriched in basic and acidic residues. Residues 49 to 139 (ITVIKKDGKR…VYGNFQGIRD (91 aa)) enclose the ATP-cone domain.

The protein belongs to the NrdR family. Requires Zn(2+) as cofactor.

Functionally, negatively regulates transcription of bacterial ribonucleotide reductase nrd genes and operons by binding to NrdR-boxes. In Microcystis aeruginosa (strain NIES-843 / IAM M-2473), this protein is Transcriptional repressor NrdR.